The primary structure comprises 192 residues: Protein SHORT HYPOCOTYL IN WHITE LIGHT 1 (192 aa).

The short motif at 43–50 (FRRLNRSL) is the Nuclear localization signal element. The segment at 70 to 92 (GGDNYDVVPDDDGFSDDDDEEDE) is disordered. Acidic residues predominate over residues 77 to 92 (VPDDDGFSDDDDEEDE). Transmembrane regions (helical) follow at residues 122-142 (ILPAAMSPRLVSFAVDGILLL) and 159-179 (GGTVFTVILLIRLFWAAASFF).

As to quaternary structure, interacts with HY5 and COP1 in the nucleus. Expressed in young seedlings (e.g. hypocotyl and cotyledons) and in green tissues (e.g. leaves, stems, sepals, and young siliques).

It localises to the nucleus membrane. Negative regulator of photomorphogenesis modulating both light and abscisic acid (ABA) signaling pathways. Negatively regulates the light-mediated inhibition of hypocotyl elongation, probably in a PHYB-mediated signaling pathway, but promotes flowering time (especially in long days) and lateral root formation. Enhances light-regulated gene expression. Promotes COP1-mediated degradation of HY5 during seedling development (e.g. hypocotyl growth) through enhanced ubiquitination in the darkness. Also involved in root gravitropism. In Arabidopsis thaliana (Mouse-ear cress), this protein is Protein SHORT HYPOCOTYL IN WHITE LIGHT 1.